Consider the following 210-residue polypeptide: Ribonuclease HII (210 aa).

Positions 18-210 (GLIAGVDEVG…FKPVKALLGL (193 aa)) constitute an RNase H type-2 domain. A divalent metal cation-binding residues include Asp24, Glu25, and Asp116.

This sequence belongs to the RNase HII family. It depends on Mn(2+) as a cofactor. Requires Mg(2+) as cofactor.

It is found in the cytoplasm. The enzyme catalyses Endonucleolytic cleavage to 5'-phosphomonoester.. Its function is as follows. Endonuclease that specifically degrades the RNA of RNA-DNA hybrids. This is Ribonuclease HII from Shewanella baltica (strain OS223).